The following is a 766-amino-acid chain: Phosphoribosylformylglycinamidine synthase subunit PurL (766 aa).

Histidine 66 is an active-site residue. ATP is bound by residues tyrosine 69 and lysine 113. Mg(2+) is bound at residue glutamate 115. Residues 116–119 (SHNH) and arginine 138 contribute to the substrate site. The active-site Proton acceptor is histidine 117. Aspartate 139 is a Mg(2+) binding site. Glutamine 264 lines the substrate pocket. Aspartate 292 is a binding site for Mg(2+). 336–338 (ESQ) contacts substrate. Residues asparagine 524 and glycine 561 each contribute to the ATP site. Asparagine 562 is a binding site for Mg(2+). Residue serine 564 coordinates substrate.

Belongs to the FGAMS family. In terms of assembly, monomer. Part of the FGAM synthase complex composed of 1 PurL, 1 PurQ and 2 PurS subunits.

Its subcellular location is the cytoplasm. The enzyme catalyses N(2)-formyl-N(1)-(5-phospho-beta-D-ribosyl)glycinamide + L-glutamine + ATP + H2O = 2-formamido-N(1)-(5-O-phospho-beta-D-ribosyl)acetamidine + L-glutamate + ADP + phosphate + H(+). It functions in the pathway purine metabolism; IMP biosynthesis via de novo pathway; 5-amino-1-(5-phospho-D-ribosyl)imidazole from N(2)-formyl-N(1)-(5-phospho-D-ribosyl)glycinamide: step 1/2. Functionally, part of the phosphoribosylformylglycinamidine synthase complex involved in the purines biosynthetic pathway. Catalyzes the ATP-dependent conversion of formylglycinamide ribonucleotide (FGAR) and glutamine to yield formylglycinamidine ribonucleotide (FGAM) and glutamate. The FGAM synthase complex is composed of three subunits. PurQ produces an ammonia molecule by converting glutamine to glutamate. PurL transfers the ammonia molecule to FGAR to form FGAM in an ATP-dependent manner. PurS interacts with PurQ and PurL and is thought to assist in the transfer of the ammonia molecule from PurQ to PurL. The sequence is that of Phosphoribosylformylglycinamidine synthase subunit PurL from Mycobacterium tuberculosis (strain CDC 1551 / Oshkosh).